Reading from the N-terminus, the 166-residue chain is Lipoprotein signal peptidase (166 aa).

Helical transmembrane passes span 9-29 (ASGALAPWLGISLIVILFDQL), 45-65 (ALTSFFSLVLVYNRGAAFGFL), 71-91 (WQRWAFTALGIGATLVICFLL), and 100-120 (FSLSLALILGGALGNVIDRLV). Active-site residues include aspartate 126 and aspartate 144. Residues 135-155 (WHFPAFNLADSAITVGAVLLV) traverse the membrane as a helical segment.

Belongs to the peptidase A8 family.

It localises to the cell inner membrane. The catalysed reaction is Release of signal peptides from bacterial membrane prolipoproteins. Hydrolyzes -Xaa-Yaa-Zaa-|-(S,diacylglyceryl)Cys-, in which Xaa is hydrophobic (preferably Leu), and Yaa (Ala or Ser) and Zaa (Gly or Ala) have small, neutral side chains.. The protein operates within protein modification; lipoprotein biosynthesis (signal peptide cleavage). Functionally, this protein specifically catalyzes the removal of signal peptides from prolipoproteins. This Burkholderia ambifaria (strain MC40-6) protein is Lipoprotein signal peptidase.